Consider the following 281-residue polypeptide: Pantothenate synthetase (281 aa).

ATP is bound at residue 30 to 37; it reads MGYLHEGH. The active-site Proton donor is the His-37. Residue Gln-61 coordinates (R)-pantoate. Gln-61 is a binding site for beta-alanine. Position 147-150 (147-150) interacts with ATP; that stretch reads GEKD. Residue Gln-153 coordinates (R)-pantoate. ATP is bound by residues Ile-176 and 184 to 187; that span reads KSSR.

This sequence belongs to the pantothenate synthetase family. In terms of assembly, homodimer.

Its subcellular location is the cytoplasm. The enzyme catalyses (R)-pantoate + beta-alanine + ATP = (R)-pantothenate + AMP + diphosphate + H(+). The protein operates within cofactor biosynthesis; (R)-pantothenate biosynthesis; (R)-pantothenate from (R)-pantoate and beta-alanine: step 1/1. Functionally, catalyzes the condensation of pantoate with beta-alanine in an ATP-dependent reaction via a pantoyl-adenylate intermediate. This Clostridium botulinum (strain Loch Maree / Type A3) protein is Pantothenate synthetase.